Here is a 283-residue protein sequence, read N- to C-terminus: MQALYDVPAPAKLNLFLHVTGRRPDGYHLLQSVFMLIDWCDVLHFEVRGNGTVTREDLTSALPADDLVVRAARALQKATGCPQGVHIGVSKHIPAQAGLGGGSSDAASTLLALNRLWKLKLSRQQLHSIALTLGADVPFFLCGASAWVEGIGDIIRRLELEHQLPPAAFAVVKPEAGLDTRMIFSHPSLKRDSSCATISGFAATHYQFGSNDLQPVAQALCPEITQAINWLESKGLQGRMTGSGSAVFAQITHAVDLHDAPAAWHVKVCENLKSHPLADWVFG.

Residue lysine 12 is part of the active site. Residue 94 to 104 (PAQAGLGGGSS) coordinates ATP. The active site involves aspartate 136.

Belongs to the GHMP kinase family. IspE subfamily.

It carries out the reaction 4-CDP-2-C-methyl-D-erythritol + ATP = 4-CDP-2-C-methyl-D-erythritol 2-phosphate + ADP + H(+). It participates in isoprenoid biosynthesis; isopentenyl diphosphate biosynthesis via DXP pathway; isopentenyl diphosphate from 1-deoxy-D-xylulose 5-phosphate: step 3/6. In terms of biological role, catalyzes the phosphorylation of the position 2 hydroxy group of 4-diphosphocytidyl-2C-methyl-D-erythritol. The protein is 4-diphosphocytidyl-2-C-methyl-D-erythritol kinase of Acidovorax ebreus (strain TPSY) (Diaphorobacter sp. (strain TPSY)).